The following is a 404-amino-acid chain: 11-beta-hydroxysteroid dehydrogenase type 2 (404 aa).

82-111 (TRAVLITGCDSGFGNATAKKLDTMGFTVLA) is an NAD(+) binding site. Ser219 serves as a coordination point for substrate. Catalysis depends on Tyr232, which acts as the Proton acceptor. Residues 383 to 404 (LTSARDIAQDQGPRPDPSPTAQ) form a disordered region.

The protein belongs to the short-chain dehydrogenases/reductases (SDR) family. Interacts with ligand-free cytoplasmic NR3C2. Highly expressed in kidney, adrenal and colon; detected at lower levels on lung, liver, and spleen. Expressed in oocytes. Expressed in uterine tissues and in corpora lutea.

Its subcellular location is the microsome. The protein localises to the endoplasmic reticulum. The enzyme catalyses an 11beta-hydroxysteroid + NAD(+) = an 11-oxosteroid + NADH + H(+). It catalyses the reaction corticosterone + NAD(+) = 11-dehydrocorticosterone + NADH + H(+). The catalysed reaction is cortisol + NAD(+) = cortisone + NADH + H(+). It carries out the reaction 11beta,17beta-dihydroxyandrost-4-ene-3-one + NAD(+) = 17beta-hydroxyandrost-4-ene-3,11-dione + NADH + H(+). The enzyme catalyses 11beta-hydroxyandrost-4-ene-3,17-dione + NAD(+) = androst-4-ene-3,11,17-trione + NADH + H(+). It functions in the pathway steroid metabolism. Inhibited by glycyrrhetinic acid, carbenoloxone, 11-alpha-OH-progesterone and 11-beta-OH-progesterone. Functionally, catalyzes the conversion of biologically active 11beta-hydroxyglucocorticoids (11beta-hydroxysteroid) such as cortisol, to inactive 11-ketoglucocorticoids (11-oxosteroid) such as cortisone, in the presence of NAD(+). Functions as a dehydrogenase (oxidase), thereby decreasing the concentration of active glucocorticoids, thus protecting the nonselective mineralocorticoid receptor from occupation by glucocorticoids. Affinity towards corticosterone is higher than cortisol or dexamethasone. Plays an important role in maintaining glucocorticoids balance during preimplantation and protects the fetus from excessive maternal corticosterone exposure. Catalyzes the oxidation of 11beta-hydroxytestosterone (11beta,17beta-dihydroxyandrost-4-ene-3-one) to 11-ketotestosterone (17beta-hydroxyandrost-4-ene-3,11-dione), a major bioactive androgen. Catalyzes the conversion of 11beta-hydroxyandrostenedione (11beta-hydroxyandrost-4-ene-3,17-dione) to 11-ketoandrostenedione (androst-4-ene-3,11,17-trione), which can be further metabolized to 11-ketotestosterone. Converts 7-beta-25-dihydroxycholesterol to 7-oxo-25-hydroxycholesterol in vitro. 7-beta-25-dihydroxycholesterol (not 7-oxo-25-hydroxycholesterol) acts as ligand for the G-protein-coupled receptor (GPCR) Epstein-Barr virus-induced gene 2 (EBI2) and may thereby regulate immune cell migration. May protect ovulating oocytes and fertilizing spermatozoa from the adverse effects of cortisol. The polypeptide is 11-beta-hydroxysteroid dehydrogenase type 2 (HSD11B2) (Bos taurus (Bovine)).